The sequence spans 278 residues: Nucleotide-binding protein LHK_02029 (278 aa).

An ATP-binding site is contributed by Gly-8–Ser-15. Asp-57–Asp-60 serves as a coordination point for GTP.

It belongs to the RapZ-like family.

Displays ATPase and GTPase activities. The protein is Nucleotide-binding protein LHK_02029 of Laribacter hongkongensis (strain HLHK9).